The primary structure comprises 215 residues: UPF0502 protein YceH (215 aa).

Lys-80 is subject to N6-acetyllysine.

This sequence belongs to the UPF0502 family.

In Escherichia coli O157:H7, this protein is UPF0502 protein YceH.